A 476-amino-acid polypeptide reads, in one-letter code: Probable flippase AglR (476 aa).

A run of 14 helical transmembrane segments spans residues 7–29 (ASAL…TIYV), 34–56 (GVGA…IPAV), 83–103 (VLTG…SPFV), 112–132 (TQLV…LGGL), 146–166 (ALWG…GVGV), 168–188 (ALFY…VYSL), 222–242 (WLDT…IYEV), 246–266 (ISAL…PTIS), 287–307 (VAGV…GDIL), 310–330 (YGPS…LSVV), 354–373 (FRIG…SLIP), 377–396 (VIGA…ILAV), 409–429 (VSAI…LFTI), and 439–459 (IEVV…LLSL).

The protein belongs to the AglR/Agl15 family.

Its subcellular location is the cell membrane. It participates in cell surface structure biogenesis; S-layer biogenesis. Functionally, involved in the assembly of a N-linked pentasaccharide that decorates the S-layer glycoprotein and flagellins. Probably mediates or contributes to the translocation of the dolichol-phosphate-mannose across the membrane. The polypeptide is Probable flippase AglR (aglR) (Haloferax volcanii (strain ATCC 29605 / DSM 3757 / JCM 8879 / NBRC 14742 / NCIMB 2012 / VKM B-1768 / DS2) (Halobacterium volcanii)).